The primary structure comprises 191 residues: Calcium and integrin-binding protein 1 (191 aa).

G2 carries the N-myristoyl glycine lipid modification. 2 EF-hand domains span residues 103–138 (TPDI…LTGE) and 148–183 (EMKQ…SPDF). 10 residues coordinate Ca(2+): D116, D118, D120, T122, D127, D161, D163, D165, T167, and E172.

Monomer. Interacts with the heterodimeric integrin alpha-IIb/beta3 (ITGA2B-ITGB3). Interacts with ITGA2B (via cytoplasmic domain); the interaction is direct and calcium-dependent. Interacts with the protein kinases PLK2/SNK and PRKDC (via the region immediately upstream of the kinase domain). Interacts with PLK3; the interaction inhibits PLK3 kinase activity. Interacts with PSEN2. Interacts (via C-terminus) with F8. Interacts with NBR1 (via C-terminus). Interacts with FEZ1 (via C-terminus). Interacts with UBR5 (via C-terminus); the interaction is sensitive to DNA damage, and may target CIB1 for ubiquitin-mediated degradation. Interacts with IFI6; the interaction is direct. Interacts with BCL2. Interacts with ITPR3; the interaction occurs in a calcium dependent manner. Interacts with PTK2/FAK1. Interacts with MAP3K5; the interaction inhibits MAP3K5 activation by phosphorylation, and its subsequent interaction with TRAF2. Interacts (via C-terminal region) with STMN2 (via the N-terminal region); the interaction is direct, occurs in a calcium-dependent manner and attenuates the STMN2-induced neurite outgrowth inhibition. Interacts with SPHK1, the interaction occurs in a calcium-dependent manner. Interacts with ITGA2B (via C-terminal cytoplasmic tail); the interaction occurs upon platelet aggregation and is stabilized/increased in a calcium and magnesium-dependent manner. Interacts with PAK1 (via N-terminal region); the interaction is direct and occurs in a calcium-dependent manner. Interacts with RAC3 (via C-terminal region); the interaction induces their association with the cytoskeleton upon alpha-IIb/beta3 integrin-mediated adhesion. Interacts with ITGA5 and ITGAV. Interacts with MYO1C. Interacts with ITGA2B (via C-terminal cytoplasmic tail region). Interacts (via C-terminal region) with PPP3R1; the interaction increases upon cardiomyocytes hypertrophy. Interacts with CACNA1C; the interaction increases upon cardiomyocytes hypertrophy. Interacts with TAS1R2 (via C-terminus); this interaction is independent of the myristoylation state of CIB1. Interacts and forms a complex with TMC6 and TMC8; the interaction stabilizes each component of the complex. As to expression, expressed in cardiomyocytes and neurons (at protein level). Expressed during early neural development.

Its subcellular location is the membrane. It is found in the cell membrane. The protein resides in the sarcolemma. It localises to the apical cell membrane. The protein localises to the cell projection. Its subcellular location is the ruffle membrane. It is found in the filopodium tip. The protein resides in the growth cone. It localises to the lamellipodium. The protein localises to the cytoplasm. Its subcellular location is the cytoskeleton. It is found in the microtubule organizing center. The protein resides in the centrosome. It localises to the perinuclear region. The protein localises to the nucleus. Its subcellular location is the neuron projection. It is found in the perikaryon. Functionally, calcium-binding protein that plays a role in the regulation of numerous cellular processes, such as cell differentiation, cell division, cell proliferation, cell migration, thrombosis, angiogenesis, cardiac hypertrophy and apoptosis. Involved in bone marrow megakaryocyte differentiation by negatively regulating thrombopoietin-mediated signaling pathway. Participates in the endomitotic cell cycle of megakaryocyte, a form of mitosis in which both karyokinesis and cytokinesis are interrupted. Plays a role in integrin signaling by negatively regulating alpha-IIb/beta3 activation in thrombin-stimulated megakaryocytes preventing platelet aggregation. Up-regulates PTK2/FAK1 activity, and is also needed for the recruitment of PTK2/FAK1 to focal adhesions; it thus appears to play an important role in focal adhesion formation. Positively regulates cell migration on fibronectin in a CDC42-dependent manner, the effect being negatively regulated by PAK1. Functions as a negative regulator of stress activated MAP kinase (MAPK) signaling pathways. Down-regulates inositol 1,4,5-trisphosphate receptor-dependent calcium signaling. Involved in sphingosine kinase SPHK1 translocation to the plasma membrane in a N-myristoylation-dependent manner preventing TNF-alpha-induced apoptosis. Regulates serine/threonine-protein kinase PLK3 activity for proper completion of cell division progression. Plays a role in microtubule (MT) dynamics during neuronal development; disrupts the MT depolymerization activity of STMN2 attenuating NGF-induced neurite outgrowth and the MT reorganization at the edge of lamellipodia. Promotes cardiomyocyte hypertrophy via activation of the calcineurin/NFAT signaling pathway. Stimulates calcineurin PPP3R1 activity by mediating its anchoring to the sarcolemma. In ischemia-induced (pathological or adaptive) angiogenesis, stimulates endothelial cell proliferation, migration and microvessel formation by activating the PAK1 and ERK1/ERK2 signaling pathway. Also promotes cancer cell survival and proliferation. May regulate cell cycle and differentiation of spermatogenic germ cells, and/or differentiation of supporting Sertoli cells. Forms a complex with TMC6/EVER1 and TMC8/EVER2 in lymphocytes and keratynocytes where CIB1 stabilizes TMC6 and TMC8 levels and reciprocally. This is Calcium and integrin-binding protein 1 (Cib1) from Rattus norvegicus (Rat).